Reading from the N-terminus, the 182-residue chain is Adenylate kinase (182 aa).

12 to 17 (GAGKGT) is a binding site for ATP. An NMP region spans residues 32 to 61 (STGDLLRAEVKAGSELGKEAEAVMNRGELV). AMP-binding positions include Thr33, Arg38, 59 to 61 (ELV), 85 to 88 (GFPR), and Gln92. The LID stretch occupies residues 126-132 (ARGRADD). ATP is bound at residue Arg127. The AMP site is built by Arg129 and Arg140. Gly168 is a binding site for ATP.

This sequence belongs to the adenylate kinase family. In terms of assembly, monomer.

It localises to the cytoplasm. It catalyses the reaction AMP + ATP = 2 ADP. It participates in purine metabolism; AMP biosynthesis via salvage pathway; AMP from ADP: step 1/1. Catalyzes the reversible transfer of the terminal phosphate group between ATP and AMP. Plays an important role in cellular energy homeostasis and in adenine nucleotide metabolism. This chain is Adenylate kinase, found in Synechococcus sp. (strain RCC307).